The sequence spans 142 residues: Large ribosomal subunit protein uL11 (142 aa).

This sequence belongs to the universal ribosomal protein uL11 family. Part of the ribosomal stalk of the 50S ribosomal subunit. Interacts with L10 and the large rRNA to form the base of the stalk. L10 forms an elongated spine to which L12 dimers bind in a sequential fashion forming a multimeric L10(L12)X complex. One or more lysine residues are methylated.

Functionally, forms part of the ribosomal stalk which helps the ribosome interact with GTP-bound translation factors. In Vibrio cholerae serotype O1 (strain ATCC 39541 / Classical Ogawa 395 / O395), this protein is Large ribosomal subunit protein uL11.